The chain runs to 439 residues: tRNA modification GTPase MnmE (439 aa).

Residues Arg20, Glu78, and Lys116 each coordinate (6S)-5-formyl-5,6,7,8-tetrahydrofolate. In terms of domain architecture, TrmE-type G spans 211-364; sequence GIYVAILGEP…LLSAIQKKVE (154 aa). GTP contacts are provided by residues 221–226, 240–246, and 265–268; these read NSGKST, SEYAGTT, and DTAG. Positions 225 and 246 each coordinate Mg(2+). Position 439 (Lys439) interacts with (6S)-5-formyl-5,6,7,8-tetrahydrofolate.

This sequence belongs to the TRAFAC class TrmE-Era-EngA-EngB-Septin-like GTPase superfamily. TrmE GTPase family. Homodimer. Heterotetramer of two MnmE and two MnmG subunits. K(+) is required as a cofactor.

The protein localises to the cytoplasm. Functionally, exhibits a very high intrinsic GTPase hydrolysis rate. Involved in the addition of a carboxymethylaminomethyl (cmnm) group at the wobble position (U34) of certain tRNAs, forming tRNA-cmnm(5)s(2)U34. In Ehrlichia ruminantium (strain Gardel), this protein is tRNA modification GTPase MnmE.